Reading from the N-terminus, the 1312-residue chain is MISNPSETKVSNFDDFSVFDVTPDPDELARKHKKPNDHGSVSIKELYRYAGFIDYILLIGGIIGAMAAGVLQPMQMLVMGDMMDTFDTSSMQNMDFSNISKAEQIEMNYELTASVADTINDLVLKMIYFAIGTTVGMFLMHFCFFVLSERQGIKIRMLYFRALLRQDAGWYDFHESGELTSRIASDVQQIQDGMSQKFGVLFQTICGFIAGYAIGFSKCWDLTLVIMAVTPFMLITVLFLGFFATKFTAKGENSLSDAGAIAEATIGNMRTVQSLGQEHEFADAYDKKMDSIKKYYILRAQVVGVGLGMLLFFMMGSLALGSWYGSLVIRGKGASKDCSAGTVMVVFMSVLMATMSIAQVAMPINALSTAQAAAYRIYQTIDRIPDIDCRSTAGLVPTECIGNIKLEDVQFRYPTRPNKQILGGLDLEIKKGETVALVGASGCGKSTTIQLVQRVYDPVGGKVTLDGNDLRELNLKWLRNQIGLVGQEPILFACTIRENIMLGAKDGETPTEEEMIECAKMANAHEFISHLPEGYDTMVGERGAALSGGQKQRIAIARALIRKPTILLLDEATSALDTQSEKIVQQALEKASQGRTTIIVAHRLTTVRNANRICVFHQGEIIEQGTHQELMDLKATYYGLVKRQSMEEEVDQETVENDLKKFREQEDKEAEQGILHKEESSTLESSDVVERLTKEYEAETKYLKHSNRFVLLRVLLNNFRHEWLLSFLGLIGGIGAGAVFPFYMIQFIGLLMTLMGMSPDVEPTTEQLHTVRNKCIWILLFGLAVFVTTYMYLGLFLSAGEKMIVRLRKLLYSALLRQNISYYDRKENMVGKVTTRLASDPTTLKGISGERVGNVVNTLSSVGFGVGIAFYYDWKVALCVMAIAPVLIVIVFLNGKLNSIQSSPATAAYEQSGITLVEAVESIKTVQSLTREDFFYNKFAADLKRPKKNILRWGPTLAFVSAANTFVTSCISAYSFYIGTYLIKKKSDYNMEFLPFTAQFMDSFTKMQKAMMSIMMAANSCGNLGQMIPDVGKAIEAAKNTFDVLDRKPSIDCYSEEGETFNDVKGEIEFKDICFRYPTRPDNAVLKGISFKAEQGKTIALVGASGCGKSTSIQLIERFYDPTYGDVLLDGHNIKDLNIHFLRSQIGMVGQEPVLFAESVIDNIRRGVPKGVEVSNEQIYAAAKMANAHDFISAMPEGYNTMVGDRGAQISGGQKQRIAIARALIRNPKVLLLDEATSALDSESEKIVQDALDKAAKGRTTIVIAHRLSTIQNADQICVIMRGKIAERGTHQELIDLKGFYYTLAMQQFGTV.

The helical transmembrane segment at 51 to 71 (GFIDYILLIGGIIGAMAAGVL) threads the bilayer. In terms of domain architecture, ABC transmembrane type-1 1 spans 59–369 (IGGIIGAMAA…VAMPINALST (311 aa)). N98 carries N-linked (GlcNAc...) asparagine glycosylation. 5 helical membrane passes run 127–147 (IYFA…FFVL), 197–217 (KFGV…IGFS), 224–244 (LVIM…GFFA), 302–322 (VVGV…ALGS), and 344–364 (MVVF…AMPI). One can recognise an ABC transporter 1 domain in the interval 404–643 (IKLEDVQFRY…KATYYGLVKR (240 aa)). 439–446 (GASGCGKS) contributes to the ATP binding site. The ABC transmembrane type-1 2 domain occupies 724 to 1033 (LLSFLGLIGG…LGQMIPDVGK (310 aa)). 2 consecutive transmembrane segments (helical) span residues 725 to 745 (LSFL…FYMI) and 776 to 796 (IWIL…LGLF). Residue N819 is glycosylated (N-linked (GlcNAc...) asparagine). A run of 3 helical transmembrane segments spans residues 852–872 (VGNV…AFYY), 874–894 (WKVA…VFLN), and 958–978 (AFVS…SFYI). The 240-residue stretch at 1068-1307 (IEFKDICFRY…KGFYYTLAMQ (240 aa)) folds into the ABC transporter 2 domain. 1103-1110 (GASGCGKS) lines the ATP pocket.

This sequence belongs to the ABC transporter superfamily. ABCB family. Multidrug resistance exporter (TC 3.A.1.201) subfamily.

It is found in the membrane. The enzyme catalyses ATP + H2O + xenobioticSide 1 = ADP + phosphate + xenobioticSide 2.. Energy-dependent efflux pump responsible for decreased drug accumulation in multidrug resistance parasites. This Entamoeba histolytica (strain ATCC 30459 / HM-1:IMSS / ABRM) protein is Multidrug resistance protein 3.